The sequence spans 352 residues: MSLNLTDAADDRSYKEMEKYTVERVAGQGTFGTVQLARDKSTGSLVAIKKVIQDPRFKNRELQIMQHLARLRHPNIVMLKNYFYTVGGEGRRNDVYLNVVMEFVPETLHRTCRNYYRRMTNPPLILVKVFMFQLLRSIACLHIPVINICHRDIKPHNVLVDEQTGELKLCDFGSAKRLAADEPNVAYICSRYYRAPELIFGNQFYTTAVDIWSVGCIFAEMLLGEPIFCGENTSGQLREIVKILGKPTKEELHKLNGSSTEINANAKATPWENVFKQPLPAEVYDLCGKIFKYVPDQRITPLDALCHPFFNELREPTTKLPSGNPLPAHLYQFTPDEVEAMTEAQREYLLKK.

The Protein kinase domain maps to 20 to 310; it reads YTVERVAGQG…PLDALCHPFF (291 aa). ATP is bound by residues 26–34 and Lys49; that span reads AGQGTFGTV. Asp152 serves as the catalytic Proton acceptor.

The protein belongs to the protein kinase superfamily. CMGC Ser/Thr protein kinase family. GSK-3 subfamily. In terms of assembly, inhibited by cyclin kinase 2 (CDK2) inhibitors, including GW8510.

It carries out the reaction L-seryl-[tau protein] + ATP = O-phospho-L-seryl-[tau protein] + ADP + H(+). It catalyses the reaction L-threonyl-[tau protein] + ATP = O-phospho-L-threonyl-[tau protein] + ADP + H(+). The sequence is that of Glycogen synthase kinase 3 from Trypanosoma brucei brucei (strain 927/4 GUTat10.1).